Reading from the N-terminus, the 120-residue chain is Large ribosomal subunit protein uL18 (120 aa).

The disordered stretch occupies residues 1–26; it reads MSKAKVTNARRKRSVRLKLRRSGGGR. Residues 8–23 show a composition bias toward basic residues; it reads NARRKRSVRLKLRRSG.

This sequence belongs to the universal ribosomal protein uL18 family. In terms of assembly, part of the 50S ribosomal subunit; part of the 5S rRNA/L5/L18/L25 subcomplex. Contacts the 5S and 23S rRNAs.

This is one of the proteins that bind and probably mediate the attachment of the 5S RNA into the large ribosomal subunit, where it forms part of the central protuberance. This is Large ribosomal subunit protein uL18 from Bradyrhizobium diazoefficiens (strain JCM 10833 / BCRC 13528 / IAM 13628 / NBRC 14792 / USDA 110).